Reading from the N-terminus, the 397-residue chain is 1-deoxy-D-xylulose 5-phosphate reductoisomerase (397 aa).

NADPH contacts are provided by Thr-10, Gly-11, Ser-12, Ile-13, Gly-36, Asn-38, and Asn-124. Position 125 (Lys-125) interacts with 1-deoxy-D-xylulose 5-phosphate. An NADPH-binding site is contributed by Glu-126. Mn(2+) is bound at residue Asp-150. 1-deoxy-D-xylulose 5-phosphate-binding residues include Ser-151, Glu-152, Ser-186, and His-209. A Mn(2+)-binding site is contributed by Glu-152. NADPH is bound at residue Gly-215. 1-deoxy-D-xylulose 5-phosphate-binding residues include Ser-222, Asn-227, Lys-228, and Glu-231. Position 231 (Glu-231) interacts with Mn(2+).

Belongs to the DXR family. It depends on Mg(2+) as a cofactor. Mn(2+) serves as cofactor.

It catalyses the reaction 2-C-methyl-D-erythritol 4-phosphate + NADP(+) = 1-deoxy-D-xylulose 5-phosphate + NADPH + H(+). Its pathway is isoprenoid biosynthesis; isopentenyl diphosphate biosynthesis via DXP pathway; isopentenyl diphosphate from 1-deoxy-D-xylulose 5-phosphate: step 1/6. Catalyzes the NADPH-dependent rearrangement and reduction of 1-deoxy-D-xylulose-5-phosphate (DXP) to 2-C-methyl-D-erythritol 4-phosphate (MEP). The protein is 1-deoxy-D-xylulose 5-phosphate reductoisomerase of Photobacterium profundum (strain SS9).